The primary structure comprises 209 residues: Protein-L-isoaspartate O-methyltransferase (209 aa).

S60 is a catalytic residue.

Belongs to the methyltransferase superfamily. L-isoaspartyl/D-aspartyl protein methyltransferase family.

Its subcellular location is the cytoplasm. It catalyses the reaction [protein]-L-isoaspartate + S-adenosyl-L-methionine = [protein]-L-isoaspartate alpha-methyl ester + S-adenosyl-L-homocysteine. Functionally, catalyzes the methyl esterification of L-isoaspartyl residues in peptides and proteins that result from spontaneous decomposition of normal L-aspartyl and L-asparaginyl residues. It plays a role in the repair and/or degradation of damaged proteins. In Photobacterium profundum (strain SS9), this protein is Protein-L-isoaspartate O-methyltransferase.